A 317-amino-acid chain; its full sequence is Ribosomal protein L11 methyltransferase (317 aa).

S-adenosyl-L-methionine-binding residues include T158, G179, D201, and N244.

Belongs to the methyltransferase superfamily. PrmA family.

Its subcellular location is the cytoplasm. The enzyme catalyses L-lysyl-[protein] + 3 S-adenosyl-L-methionine = N(6),N(6),N(6)-trimethyl-L-lysyl-[protein] + 3 S-adenosyl-L-homocysteine + 3 H(+). In terms of biological role, methylates ribosomal protein L11. The chain is Ribosomal protein L11 methyltransferase from Lactococcus lactis subsp. cremoris (strain MG1363).